The following is a 166-amino-acid chain: Probable histone deacetylase complex subunit SAP18 (166 aa).

The disordered stretch occupies residues 143–166 (GRRFNNREQGDRFDHRQRQRSPIR). Residues 147-158 (NNREQGDRFDHR) show a composition bias toward basic and acidic residues.

The protein belongs to the SAP18 family. In terms of assembly, interacts with SIN3 and histone deacetylase.

Acts in transcription repression. Involved in the tethering of the SIN3 complex to core histone proteins. In Caenorhabditis elegans, this protein is Probable histone deacetylase complex subunit SAP18.